Consider the following 186-residue polypeptide: dCTP deaminase (186 aa).

Position 107–112 (107–112 (KSTYAR)) interacts with dCTP. Glu133 serves as the catalytic Proton donor/acceptor. Residues Gln152, Tyr166, and Gln176 each coordinate dCTP.

The protein belongs to the dCTP deaminase family. In terms of assembly, homotrimer.

The catalysed reaction is dCTP + H2O + H(+) = dUTP + NH4(+). The protein operates within pyrimidine metabolism; dUMP biosynthesis; dUMP from dCTP (dUTP route): step 1/2. Catalyzes the deamination of dCTP to dUTP. This is dCTP deaminase from Campylobacter curvus (strain 525.92).